The following is a 468-amino-acid chain: MKINSPLEAYKYLPQTNCGECGEATCMAFASKLIDRSGKPTQCPPLVKEKKFAKKLAELERLLAPEIREITIGVGDRAVKIGGDDVLYRHKLTFFNKTKMFYDVTDTMDEAALLERTKKVADFRKFYVGRNLLLDGVAIRSVSNDPEKFAAAVKKVSEVGIPMILCSFNPAVLKAGLEVAKDKNPLIYAANKDNWKEVGELALEYNVPVVVSAFNDLDGLKTLAKTFAEAGIKDIVLDPGTYPSGQGLKDSFTNFLKIRRAGIMGDTEIAYPIMALPITAWMAGISDPVSAAYWETAMAAIFTIRYGDIMILHSLEPYATLPEVHLAETIYTDPRTPVAVDSKMYKVGEPDENSPVLFTTNFALTYYTVESDLSSNGITCWLLAVDTDGIGVEAAAAGGQLTADKVKDAFEKSGFDLKKDVTHNTVIIPGLAARLQGDLEDKLGARVLVGPMDSGRLPGWFEKNWPPK.

One can recognise a 4Fe-4S domain in the interval 1 to 60 (MKINSPLEAYKYLPQTNCGECGEATCMAFASKLIDRSGKPTQCPPLVKEKKFAKKLAELE). 4 residues coordinate [4Fe-4S] cluster: Cys-18, Cys-21, Cys-26, and Cys-43.

Heterodimer of delta and gamma chains. The ACDS complex is made up of alpha, epsilon, beta, gamma and delta chains with a probable stoichiometry of (alpha(2)epsilon(2))(4)-beta(8)-(gamma(1)delta(1))(8). Corrinoid is required as a cofactor. It depends on [4Fe-4S] cluster as a cofactor.

It catalyses the reaction 5,6,7,8-tetrahydrosarcinapterin + methyl-Co(III)-[corrinoid Fe-S protein] = 5-methyltetrahydrosarcinapterin + Co(I)-[corrinoid Fe-S protein] + H(+). It functions in the pathway one-carbon metabolism; methanogenesis from acetate. Its function is as follows. Part of a complex that catalyzes the reversible cleavage of acetyl-CoA, allowing growth on acetate as sole source of carbon and energy. In Methanosarcina thermophila, this protein is Acetyl-CoA decarbonylase/synthase complex subunit gamma 2.